Consider the following 292-residue polypeptide: Protein sarah (292 aa).

A compositionally biased stretch (low complexity) spans Met1 to Arg51. The interval Met1–Phe111 is disordered. Residues Ser67, Ser72, and Ser100 each carry the phosphoserine modification. Acidic residues predominate over residues Val98–Phe111. Thr102 and Thr196 each carry phosphothreonine. 2 positions are modified to phosphoserine: Ser215 and Ser219. Thr246 bears the Phosphothreonine mark.

It belongs to the RCAN family. In terms of assembly, interacts with Pp2B-14D, CanA-14F and CanB2. Phosphorylation at Ser-215 and Ser-219 is essential for calcineurin activation and completion of female meiosis. Sgg is required for phosphorylation of Ser-215 in activated eggs. Ser-100, Thr-102 and Ser-219 are highly phosphorylated in both ovaries and activated eggs; however, phosphorylation at Ser-100 or Thr-102 is not required for sra function in completion of female meiosis. As to expression, expressed in central nervous system of the third instar larvae, with a relatively intense signal in the brain and weak signals in the ventral ganglion. Relatively low, but ubiquitous expression level is observed in leg and wing imaginal disks, no signal is detected in the eye-antennal disks. Expressed in all neurons in the adult brain.

Functionally, required for elongation of meiosis I spindle. Critical for ovulation, meiotic progression in oocytes and female courtship behavior, including their postmating changes. Regulates female meiosis by controlling calcineurin activity in the germline. Has a role in calcium signaling during egg activation; bcd mRNA polyadenylation and translation in the oocyte. In Drosophila melanogaster (Fruit fly), this protein is Protein sarah (sra).